Consider the following 114-residue polypeptide: Beta-microseminoprotein (114 aa).

A signal peptide spans 1 to 20 (MNVLLGGFVIFATFVTLCNA). Disulfide bonds link C22–C70, C38–C62, C57–C93, C60–C69, and C84–C107.

It belongs to the beta-microseminoprotein family. Homodimer; Interacts with PI16.

It localises to the secreted. The sequence is that of Beta-microseminoprotein (MSMB) from Macaca mulatta (Rhesus macaque).